A 498-amino-acid polypeptide reads, in one-letter code: ATP synthase subunit beta, chloroplastic (498 aa).

172 to 179 (GGAGVGKT) contacts ATP.

This sequence belongs to the ATPase alpha/beta chains family. In terms of assembly, F-type ATPases have 2 components, CF(1) - the catalytic core - and CF(0) - the membrane proton channel. CF(1) has five subunits: alpha(3), beta(3), gamma(1), delta(1), epsilon(1). CF(0) has four main subunits: a(1), b(1), b'(1) and c(9-12).

The protein localises to the plastid. It is found in the chloroplast thylakoid membrane. The enzyme catalyses ATP + H2O + 4 H(+)(in) = ADP + phosphate + 5 H(+)(out). Functionally, produces ATP from ADP in the presence of a proton gradient across the membrane. The catalytic sites are hosted primarily by the beta subunits. The protein is ATP synthase subunit beta, chloroplastic of Hyphaene coriacea (Ilala palm).